Here is a 229-residue protein sequence, read N- to C-terminus: MGKKYIESSKLIDKNALYTPAEALELAVKTAKAKFDETIELHVRLGVDPRHADQQVRGAVVLPHGTGKDVKVLVFAKGEKAKEAEAAGADFVGADELVQKIQGENWFDYDVVVATPDMMGVVGRLGRVLGPKGLMPNPKSGTVTFDVANAIKEIKAGKVEYRVDKTAIVHCPIGKKSFGTEKLVENFKALMDALVKAKPAAAKGQYLKSVSVSATMGPGAKVNPAKVLD.

It belongs to the universal ribosomal protein uL1 family. As to quaternary structure, part of the 50S ribosomal subunit.

Binds directly to 23S rRNA. The L1 stalk is quite mobile in the ribosome, and is involved in E site tRNA release. In terms of biological role, protein L1 is also a translational repressor protein, it controls the translation of the L11 operon by binding to its mRNA. The chain is Large ribosomal subunit protein uL1 from Clostridium perfringens (strain ATCC 13124 / DSM 756 / JCM 1290 / NCIMB 6125 / NCTC 8237 / Type A).